An 878-amino-acid chain; its full sequence is Alanine--tRNA ligase (878 aa).

Positions 566, 570, 668, and 672 each coordinate Zn(2+).

It belongs to the class-II aminoacyl-tRNA synthetase family. Zn(2+) is required as a cofactor.

It is found in the cytoplasm. The catalysed reaction is tRNA(Ala) + L-alanine + ATP = L-alanyl-tRNA(Ala) + AMP + diphosphate. In terms of biological role, catalyzes the attachment of alanine to tRNA(Ala) in a two-step reaction: alanine is first activated by ATP to form Ala-AMP and then transferred to the acceptor end of tRNA(Ala). Also edits incorrectly charged Ser-tRNA(Ala) and Gly-tRNA(Ala) via its editing domain. The sequence is that of Alanine--tRNA ligase from Bacillus subtilis (strain 168).